Here is a 495-residue protein sequence, read N- to C-terminus: Glucose-6-phosphate 1-dehydrogenase (495 aa).

Ser1 bears the N-acetylserine mark. Residues Gly15 to Arg22, Arg49, and Lys149 contribute to the NADP(+) site. D-glucose 6-phosphate is bound by residues Lys149, His179–Lys183, Glu217, and Asp236. Residue His241 is the Proton acceptor of the active site. Arg332 contacts NADP(+). D-glucose 6-phosphate is bound at residue Lys335. NADP(+) contacts are provided by Lys341, Arg345, and Arg367. Gln369 serves as a coordination point for D-glucose 6-phosphate. NADP(+) is bound by residues Tyr375 to Lys377, Asp395 to Thr397, and Lys463.

It belongs to the glucose-6-phosphate dehydrogenase family.

It catalyses the reaction D-glucose 6-phosphate + NADP(+) = 6-phospho-D-glucono-1,5-lactone + NADPH + H(+). Its pathway is carbohydrate degradation; pentose phosphate pathway; D-ribulose 5-phosphate from D-glucose 6-phosphate (oxidative stage): step 1/3. Functionally, catalyzes the rate-limiting step of the oxidative pentose-phosphate pathway, which represents a route for the dissimilation of carbohydrates besides glycolysis. The main function of this enzyme is to provide reducing power (NADPH) and pentose phosphates for fatty acid and nucleic acid synthesis. This is Glucose-6-phosphate 1-dehydrogenase from Cyberlindnera jadinii (Torula yeast).